The primary structure comprises 276 residues: Cerberus (276 aa).

The N-terminal stretch at Met1–Gly20 is a signal peptide. Residues Asn103, Asn118, and Asn160 are each glycosylated (N-linked (GlcNAc...) asparagine). 4 cysteine pairs are disulfide-bonded: Cys175/Cys221, Cys189/Cys235, Cys199/Cys251, and Cys203/Cys253. One can recognise a CTCK domain in the interval Cys175 to Asn259. Residue Asn234 is glycosylated (N-linked (GlcNAc...) asparagine).

The protein belongs to the DAN family. The long chain interacts with nodal/nr-1, bmp4 and wnt8, thereby inhibiting their function. The short chain interacts with nodal/nr-1 but not bmp4 or wnt8. As to expression, expressed in the anterior endomesoderm of the early gastrula with expression expanded laterally around the margin at the endoderm/mesoderm boundary.

The protein resides in the secreted. Inhibits wnt, nodal/nr-1 and bmp signaling in the embryo to promote head formation and anterior neural induction. Within the endoderm, acts as an essential mediator of nodal/nr-1-induced cardiogenesis in the overlying mesoderm. This is Cerberus from Xenopus tropicalis (Western clawed frog).